We begin with the raw amino-acid sequence, 476 residues long: Growth/differentiation factor 10 (476 aa).

The first 29 residues, 1–29 (MAPGPARISLGSQLLPMVPLLLLLRGAGC), serve as a signal peptide directing secretion. Positions 30–366 (GHRGPSWSSL…EKTMQKARRR (337 aa)) are excised as a propeptide. Residues 39 to 63 (LPSAAAGLQGDRDSQQSPGDAAAAL) are disordered. N-linked (GlcNAc...) asparagine glycans are attached at residues N114, N152, and N277. Residues 268 to 301 (GDFEPGAAPNSSADPRVRRAAQVSKPLQDNELPG) are disordered. Cystine bridges form between C374–C441, C403–C473, and C407–C475. N467 carries N-linked (GlcNAc...) asparagine glycosylation.

This sequence belongs to the TGF-beta family. Homodimer or heterodimer. Can form a non-covalent complex of the mature region and the pro-region. Highly expressed in epididymal adipose tissue, brain, bone and aorta and to a lesser extent in liver and spleen. Expressed at higher levels in preadipocytes than in mature adipocytes. Strongly expressed in glial cells of the cerebellum.

The protein resides in the secreted. Its function is as follows. Growth factor involved in osteogenesis and adipogenesis. Plays an inhibitory role in the process of osteoblast differentiation via SMAD2/3 pathway. Plays an inhibitory role in the process of adipogenesis. The chain is Growth/differentiation factor 10 from Mus musculus (Mouse).